The primary structure comprises 528 residues: Peptide chain release factor 3 (528 aa).

The 269-residue stretch at 11 to 279 (EKRRTFAIIS…GLVEWAPKPL (269 aa)) folds into the tr-type G domain. Residues 20–27 (SHPDAGKT), 88–92 (DTPGH), and 142–145 (NKCD) each bind GTP.

The protein belongs to the TRAFAC class translation factor GTPase superfamily. Classic translation factor GTPase family. PrfC subfamily.

The protein localises to the cytoplasm. Its function is as follows. Increases the formation of ribosomal termination complexes and stimulates activities of RF-1 and RF-2. It binds guanine nucleotides and has strong preference for UGA stop codons. It may interact directly with the ribosome. The stimulation of RF-1 and RF-2 is significantly reduced by GTP and GDP, but not by GMP. This Psychromonas ingrahamii (strain DSM 17664 / CCUG 51855 / 37) protein is Peptide chain release factor 3.